The following is a 450-amino-acid chain: MLSILWNLAAFIIALGVLITVHEFGHFWVARRCGVRVERFSIGFGKALWRRTDRYGTEYVIALIPLGGYVKMLDERAEPVAPELRRHAFNNKTVGQRAAIIAAGPVANFIFAIFAYWLVFIIGVPGVRPVIGEITPNSIAAQAQIAPGTELKAVDGIETPDWDAVRLQLVSKIGDQQTTVSVAPFGSDQRQDKTLDLRHWAFEPDKQDPVSSLGIRPRGPQIEPVLSEVQANSAASKAGLQAGDRIVKVDGQPLTQWMKFVTFVRDNPGKPLALEIERQGSALSLTLTPDTKSVNGKAEGFAGVVPKIIPLPEEYKTIRQYGPFSAILEATDKTWQLMKLTVSMLGKLITGDVKLNNLSGPISIAQGAGMSAEFGVIYYLMFLALISVNLGIINLFPLPVLDGGHLLFLAIEKLKGGPVSERVQDFSYRIGSILLVLLMGLALFNDFSRL.

The helical transmembrane segment at 1–21 (MLSILWNLAAFIIALGVLITV) threads the bilayer. His-22 provides a ligand contact to Zn(2+). At 22 to 103 (HEFGHFWVAR…VGQRAAIIAA (82 aa)) the chain is on the periplasmic side. Glu-23 is an active-site residue. Position 26 (His-26) interacts with Zn(2+). A helical transmembrane segment spans residues 104–124 (GPVANFIFAIFAYWLVFIIGV). 2 PDZ domains span residues 115-186 (AYWL…APFG) and 199-291 (HWAF…TPDT). Over 125-375 (PGVRPVIGEI…QGAGMSAEFG (251 aa)) the chain is Cytoplasmic. The helical transmembrane segment at 376-396 (VIYYLMFLALISVNLGIINLF) threads the bilayer. The Periplasmic portion of the chain corresponds to 397 to 429 (PLPVLDGGHLLFLAIEKLKGGPVSERVQDFSYR). Residues 430–450 (IGSILLVLLMGLALFNDFSRL) traverse the membrane as a helical segment.

Belongs to the peptidase M50B family. Zn(2+) is required as a cofactor.

The protein resides in the cell inner membrane. Its function is as follows. A site-2 regulated intramembrane protease that cleaves the peptide bond between 'Ala-108' and 'Cys-109' in the transmembrane region of RseA. Part of a regulated intramembrane proteolysis (RIP) cascade. Acts on DegS-cleaved RseA to release the cytoplasmic domain of RseA. This provides the cell with sigma-E (RpoE) activity through the proteolysis of RseA. In Salmonella typhimurium (strain 14028s / SGSC 2262), this protein is Regulator of sigma-E protease RseP (rsep).